The sequence spans 282 residues: Large ribosomal subunit protein uL2 (282 aa).

2 disordered regions span residues 26-55 (KKSPEKSLLESQSHTAGRNNYGRMTVRHRG) and 218-266 (PHVR…HNKS). Over residues 34–43 (LESQSHTAGR) the composition is skewed to polar residues. Residues 254 to 266 (TIGKKTRNKHNKS) are compositionally biased toward basic residues.

The protein belongs to the universal ribosomal protein uL2 family. In terms of assembly, part of the 50S ribosomal subunit. Forms a bridge to the 30S subunit in the 70S ribosome.

One of the primary rRNA binding proteins. Required for association of the 30S and 50S subunits to form the 70S ribosome, for tRNA binding and peptide bond formation. It has been suggested to have peptidyltransferase activity; this is somewhat controversial. Makes several contacts with the 16S rRNA in the 70S ribosome. The polypeptide is Large ribosomal subunit protein uL2 (Pediococcus pentosaceus (strain ATCC 25745 / CCUG 21536 / LMG 10740 / 183-1w)).